We begin with the raw amino-acid sequence, 96 residues long: Large ribosomal subunit protein uL23cz (96 aa).

Belongs to the universal ribosomal protein uL23 family. Part of the 50S ribosomal subunit.

It localises to the plastid. It is found in the chloroplast. Functionally, binds to 23S rRNA. In Sorghum bicolor (Sorghum), this protein is Large ribosomal subunit protein uL23cz (rpl23-A).